Reading from the N-terminus, the 150-residue chain is Ribonuclease pancreatic delta-type (150 aa).

An N-terminal signal peptide occupies residues 1–25 (MGLEKSFILFSLLVLVLGWVQPSLG). Arg-35 lines the substrate pocket. Residue His-37 is the Proton acceptor of the active site. 3 disulfide bridges follow: Cys-51/Cys-110, Cys-65/Cys-121, and Cys-83/Cys-136. Residues 66 to 70 (KRVNT), Lys-91, and Arg-111 contribute to the substrate site. His-145 acts as the Proton donor in catalysis.

This sequence belongs to the pancreatic ribonuclease family. As to quaternary structure, monomer.

The protein resides in the secreted. It catalyses the reaction an [RNA] containing cytidine + H2O = an [RNA]-3'-cytidine-3'-phosphate + a 5'-hydroxy-ribonucleotide-3'-[RNA].. The enzyme catalyses an [RNA] containing uridine + H2O = an [RNA]-3'-uridine-3'-phosphate + a 5'-hydroxy-ribonucleotide-3'-[RNA].. Its function is as follows. Endonuclease that catalyzes the cleavage of RNA on the 3' side of pyrimidine nucleotides. Acts on single-stranded and double-stranded RNA. This is Ribonuclease pancreatic delta-type from Rattus rattus (Black rat).